We begin with the raw amino-acid sequence, 691 residues long: Mediator of RNA polymerase II transcription subunit 17 (691 aa).

The stretch at 158–185 (KLESFDAAANKLLQSAQRLEEDIAAETK) forms a coiled coil.

Belongs to the Mediator complex subunit 17 family. In terms of assembly, component of the Mediator complex.

Its subcellular location is the nucleus. Its function is as follows. Component of the Mediator complex, a coactivator involved in the regulated transcription of nearly all RNA polymerase II-dependent genes. Mediator functions as a bridge to convey information from gene-specific regulatory proteins to the basal RNA polymerase II transcription machinery. Mediator is recruited to promoters by direct interactions with regulatory proteins and serves as a scaffold for the assembly of a functional preinitiation complex with RNA polymerase II and the general transcription factors. This chain is Mediator of RNA polymerase II transcription subunit 17 (SRB4), found in Coccidioides immitis (strain RS) (Valley fever fungus).